Consider the following 275-residue polypeptide: uncharacterized protein (275 aa).

D45 contributes to the NADPH binding site. Catalysis depends on proton donor residues Y50 and H111. NADPH is bound by residues S139, Q162, L191, K196, S232, S233, and R237.

It belongs to the aldo/keto reductase family.

It is found in the cytoplasm. It localises to the nucleus. This is an uncharacterized protein from Schizosaccharomyces pombe (strain 972 / ATCC 24843) (Fission yeast).